The primary structure comprises 308 residues: UDP-3-O-acyl-N-acetylglucosamine deacetylase (308 aa).

Residues His-78, His-235, and Asp-239 each coordinate Zn(2+). His-262 (proton donor) is an active-site residue.

It belongs to the LpxC family. Zn(2+) serves as cofactor.

The catalysed reaction is a UDP-3-O-[(3R)-3-hydroxyacyl]-N-acetyl-alpha-D-glucosamine + H2O = a UDP-3-O-[(3R)-3-hydroxyacyl]-alpha-D-glucosamine + acetate. The protein operates within glycolipid biosynthesis; lipid IV(A) biosynthesis; lipid IV(A) from (3R)-3-hydroxytetradecanoyl-[acyl-carrier-protein] and UDP-N-acetyl-alpha-D-glucosamine: step 2/6. Functionally, catalyzes the hydrolysis of UDP-3-O-myristoyl-N-acetylglucosamine to form UDP-3-O-myristoylglucosamine and acetate, the committed step in lipid A biosynthesis. This Anaeromyxobacter dehalogenans (strain 2CP-C) protein is UDP-3-O-acyl-N-acetylglucosamine deacetylase.